We begin with the raw amino-acid sequence, 276 residues long: Undecaprenyl-diphosphatase (276 aa).

The next 8 membrane-spanning stretches (helical) occupy residues 1 to 21, 40 to 60, 93 to 113, 120 to 140, 154 to 174, 199 to 219, 227 to 247, and 255 to 275; these read MELY…FLPV, ALSF…LVFF, VRLA…GLIL, LFSS…FLWL, IGFG…IPGI, FLLS…ESFA, VTLL…VALL, and FYLF…AGFV.

This sequence belongs to the UppP family.

It is found in the cell inner membrane. The enzyme catalyses di-trans,octa-cis-undecaprenyl diphosphate + H2O = di-trans,octa-cis-undecaprenyl phosphate + phosphate + H(+). In terms of biological role, catalyzes the dephosphorylation of undecaprenyl diphosphate (UPP). Confers resistance to bacitracin. This chain is Undecaprenyl-diphosphatase, found in Desulforapulum autotrophicum (strain ATCC 43914 / DSM 3382 / VKM B-1955 / HRM2) (Desulfobacterium autotrophicum).